A 232-amino-acid chain; its full sequence is 2,3-bisphosphoglycerate-dependent phosphoglycerate mutase (232 aa).

Residues 10 to 17, 23 to 24, Arg62, 89 to 92, Lys100, 116 to 117, and 185 to 186 contribute to the substrate site; these read RHGESQWN, TG, ERHY, RR, and GN. The active-site Tele-phosphohistidine intermediate is His11. Residue Glu89 is the Proton donor/acceptor of the active site.

It belongs to the phosphoglycerate mutase family. BPG-dependent PGAM subfamily. Homodimer.

The catalysed reaction is (2R)-2-phosphoglycerate = (2R)-3-phosphoglycerate. It functions in the pathway carbohydrate degradation; glycolysis; pyruvate from D-glyceraldehyde 3-phosphate: step 3/5. Catalyzes the interconversion of 2-phosphoglycerate and 3-phosphoglycerate. The polypeptide is 2,3-bisphosphoglycerate-dependent phosphoglycerate mutase (Blochmanniella floridana).